The primary structure comprises 60 residues: UPF0337 protein SSP1134 (60 aa).

The interval 1-41 (MADENKFEQAKGNVKETVGNVTDNKELENEGKEDKTSGKAK) is disordered. A compositionally biased stretch (basic and acidic residues) spans 23 to 41 (DNKELENEGKEDKTSGKAK).

It belongs to the UPF0337 (CsbD) family.

This chain is UPF0337 protein SSP1134, found in Staphylococcus saprophyticus subsp. saprophyticus (strain ATCC 15305 / DSM 20229 / NCIMB 8711 / NCTC 7292 / S-41).